The chain runs to 412 residues: Multifunctional CCA protein (412 aa).

Residues glycine 8 and arginine 11 each coordinate ATP. Positions 8 and 11 each coordinate CTP. Mg(2+)-binding residues include glutamate 21 and aspartate 23. Residues arginine 91, arginine 137, and arginine 140 each coordinate ATP. Residues arginine 91, arginine 137, and arginine 140 each coordinate CTP. Positions 228-329 (CGIHTLMSLQ…WRLLQRLDVL (102 aa)) constitute an HD domain.

It belongs to the tRNA nucleotidyltransferase/poly(A) polymerase family. Bacterial CCA-adding enzyme type 1 subfamily. Monomer. Can also form homodimers and oligomers. The cofactor is Mg(2+). Ni(2+) is required as a cofactor.

The enzyme catalyses a tRNA precursor + 2 CTP + ATP = a tRNA with a 3' CCA end + 3 diphosphate. The catalysed reaction is a tRNA with a 3' CCA end + 2 CTP + ATP = a tRNA with a 3' CCACCA end + 3 diphosphate. Catalyzes the addition and repair of the essential 3'-terminal CCA sequence in tRNAs without using a nucleic acid template. Adds these three nucleotides in the order of C, C, and A to the tRNA nucleotide-73, using CTP and ATP as substrates and producing inorganic pyrophosphate. tRNA 3'-terminal CCA addition is required both for tRNA processing and repair. Also involved in tRNA surveillance by mediating tandem CCA addition to generate a CCACCA at the 3' terminus of unstable tRNAs. While stable tRNAs receive only 3'-terminal CCA, unstable tRNAs are marked with CCACCA and rapidly degraded. The protein is Multifunctional CCA protein of Acinetobacter baumannii (strain AB307-0294).